The primary structure comprises 305 residues: Protoheme IX farnesyltransferase (305 aa).

9 helical membrane passes run 26 to 46 (VMSL…QPVN), 47 to 67 (PFVA…SGAL), 98 to 118 (LAVG…AANW), 119 to 139 (FAAG…TIWL), 147 to 167 (IVIG…CATG), 174 to 194 (LLMF…LALF), 220 to 240 (IFAY…TSVG), 243 to 263 (LYLA…WQIL), and 284 to 304 (LSLY…WVGG).

It belongs to the UbiA prenyltransferase family. Protoheme IX farnesyltransferase subfamily. Interacts with CtaA.

The protein localises to the cell inner membrane. The enzyme catalyses heme b + (2E,6E)-farnesyl diphosphate + H2O = Fe(II)-heme o + diphosphate. The protein operates within porphyrin-containing compound metabolism; heme O biosynthesis; heme O from protoheme: step 1/1. Converts heme B (protoheme IX) to heme O by substitution of the vinyl group on carbon 2 of heme B porphyrin ring with a hydroxyethyl farnesyl side group. The sequence is that of Protoheme IX farnesyltransferase from Paracoccus denitrificans (strain Pd 1222).